Consider the following 173-residue polypeptide: Putative metal-dependent hydrolase OB0413 (173 aa).

Positions 64, 155, and 159 each coordinate Zn(2+).

The protein belongs to the metal hydrolase YfiT family. As to quaternary structure, homodimer. It depends on Zn(2+) as a cofactor.

Its subcellular location is the cytoplasm. Functionally, possible metal-dependent hydrolase. In Oceanobacillus iheyensis (strain DSM 14371 / CIP 107618 / JCM 11309 / KCTC 3954 / HTE831), this protein is Putative metal-dependent hydrolase OB0413.